An 878-amino-acid chain; its full sequence is Protein argonaute 6 (878 aa).

Positions 1 to 17 (METSSSLPLSPISIEPE) are enriched in low complexity. Positions 1–25 (METSSSLPLSPISIEPEQPSHRDYD) are disordered. The region spanning 259–372 (PVIEFLKANQ…LPLEFCNLVS (114 aa)) is the PAZ domain. In terms of domain architecture, Piwi spans 541–851 (FILCILPERK…AAAQVAQFTK (311 aa)).

The protein belongs to the argonaute family. Ago subfamily. In terms of tissue distribution, expressed in roots, cotyledons and shoot meristematic region.

It localises to the nucleus. Involved in transcriptional gene silencing (TGS). Component of the RISC complex that associate with the small interfering RNA (siRNA) pathway involved in direct cytosine methylation at endogenous DNA repeats. Required for the accumulation of specific siRNAs derived from transgene and heterochromatin-related endogenous loci. Involved in RNA-directed DNA methylation (RdDM) at specific endogenous loci. Probably not required for the accumulation of siRNAs derived from transgene inverted repeats that induce post-transcriptional gene silencing (PTGS). Associates mainly with small RNAs of 24 nucleotide in length and preferentially recruits small RNAs with a 5' terminal adenosine. Targeted by turnip yellows virus (TuYV) protein P0 (via F-box-like domain) for probable proteasome degradation and thereby inactivating AGO6 function in RNA silencing. This Arabidopsis thaliana (Mouse-ear cress) protein is Protein argonaute 6 (AGO6).